A 219-amino-acid polypeptide reads, in one-letter code: Mucosal pentraxin (219 aa).

The N-terminal stretch at 1–19 (MEKLIVGTLLLTVLSGGIS) is a signal peptide. Residues 24–219 (DGKAFIFPQE…YVVTKPKLWT (196 aa)) form the Pentraxin (PTX) domain. A disulfide bond links Cys-55 and Cys-114. Ca(2+)-binding residues include Asp-77, Asn-78, Glu-155, Gln-156, Asp-157, and Gln-167.

The protein belongs to the pentraxin family. As to quaternary structure, homopentamer. Pentraxin (or pentaxin) have a discoid arrangement of 5 non-covalently bound subunits. It depends on Ca(2+) as a cofactor. As to expression, expression is restricted to small intestine, stomach and colon. Within colon, expressed in epithelial cells located within the lower to mid region of transverse and distal crypts, but not in proximal colon.

It localises to the secreted. This Rattus norvegicus (Rat) protein is Mucosal pentraxin (Mptx1).